The following is a 159-amino-acid chain: Ribosomal RNA large subunit methyltransferase H (159 aa).

Residues Leu76, Gly107, and 126–131 contribute to the S-adenosyl-L-methionine site; that span reads LSSLTL.

It belongs to the RNA methyltransferase RlmH family. As to quaternary structure, homodimer.

The protein resides in the cytoplasm. It catalyses the reaction pseudouridine(1915) in 23S rRNA + S-adenosyl-L-methionine = N(3)-methylpseudouridine(1915) in 23S rRNA + S-adenosyl-L-homocysteine + H(+). In terms of biological role, specifically methylates the pseudouridine at position 1915 (m3Psi1915) in 23S rRNA. The protein is Ribosomal RNA large subunit methyltransferase H of Cupriavidus necator (strain ATCC 17699 / DSM 428 / KCTC 22496 / NCIMB 10442 / H16 / Stanier 337) (Ralstonia eutropha).